The primary structure comprises 86 residues: Cell division topological specificity factor (86 aa).

The protein belongs to the MinE family.

Prevents the cell division inhibition by proteins MinC and MinD at internal division sites while permitting inhibition at polar sites. This ensures cell division at the proper site by restricting the formation of a division septum at the midpoint of the long axis of the cell. This is Cell division topological specificity factor from Parasynechococcus marenigrum (strain WH8102).